Reading from the N-terminus, the 260-residue chain is Flap endonuclease Xni (260 aa).

D105 is a Mg(2+) binding site. The region spanning 164–254 is the 5'-3' exonuclease domain; the sequence is SQFLDLLALA…LKDFRVNGPA (91 aa). K(+)-binding residues include L172, A173, P181, I183, and I186. Residues 185–190 form an interaction with DNA region; the sequence is GIGPKS.

This sequence belongs to the Xni family. It depends on Mg(2+) as a cofactor. Requires K(+) as cofactor.

In terms of biological role, has flap endonuclease activity. During DNA replication, flap endonucleases cleave the 5'-overhanging flap structure that is generated by displacement synthesis when DNA polymerase encounters the 5'-end of a downstream Okazaki fragment. The chain is Flap endonuclease Xni from Shewanella sp. (strain ANA-3).